Reading from the N-terminus, the 405-residue chain is Probable tRNA sulfurtransferase (405 aa).

The THUMP domain maps to 75-183 (PRAAGAAADV…QNLAYVYLET (109 aa)). Residues 201–202 (LM), Lys285, Gly307, and Gln316 each bind ATP.

It belongs to the ThiI family.

The protein resides in the cytoplasm. It catalyses the reaction [ThiI sulfur-carrier protein]-S-sulfanyl-L-cysteine + a uridine in tRNA + 2 reduced [2Fe-2S]-[ferredoxin] + ATP + H(+) = [ThiI sulfur-carrier protein]-L-cysteine + a 4-thiouridine in tRNA + 2 oxidized [2Fe-2S]-[ferredoxin] + AMP + diphosphate. The catalysed reaction is [ThiS sulfur-carrier protein]-C-terminal Gly-Gly-AMP + S-sulfanyl-L-cysteinyl-[cysteine desulfurase] + AH2 = [ThiS sulfur-carrier protein]-C-terminal-Gly-aminoethanethioate + L-cysteinyl-[cysteine desulfurase] + A + AMP + 2 H(+). It participates in cofactor biosynthesis; thiamine diphosphate biosynthesis. Catalyzes the ATP-dependent transfer of a sulfur to tRNA to produce 4-thiouridine in position 8 of tRNAs, which functions as a near-UV photosensor. Also catalyzes the transfer of sulfur to the sulfur carrier protein ThiS, forming ThiS-thiocarboxylate. This is a step in the synthesis of thiazole, in the thiamine biosynthesis pathway. The sulfur is donated as persulfide by IscS. The chain is Probable tRNA sulfurtransferase from Methanosarcina mazei (strain ATCC BAA-159 / DSM 3647 / Goe1 / Go1 / JCM 11833 / OCM 88) (Methanosarcina frisia).